The primary structure comprises 632 residues: Probable potassium transport system protein Kup 3 (632 aa).

12 helical membrane passes run 17 to 37 (LFYL…TSPL), 60 to 80 (LISL…VLFL), 106 to 126 (TAIL…DAMI), 144 to 164 (PSLS…LFVV), 175 to 195 (FFGP…ISHI), 210 to 230 (AVSF…AVFL), 254 to 274 (WFLL…ALVL), 292 to 312 (ALLP…QAVI), 344 to 364 (IFVP…VLSF), 370 to 390 (LATA…IMAF), 401 to 421 (LPLA…FLGA), and 426 to 446 (IHDG…IMWT).

It belongs to the HAK/KUP transporter (TC 2.A.72) family.

It localises to the cell inner membrane. It carries out the reaction K(+)(in) + H(+)(in) = K(+)(out) + H(+)(out). Its function is as follows. Transport of potassium into the cell. Likely operates as a K(+):H(+) symporter. This Rhizobium etli (strain ATCC 51251 / DSM 11541 / JCM 21823 / NBRC 15573 / CFN 42) protein is Probable potassium transport system protein Kup 3.